The chain runs to 810 residues: Hemoglobin-haptoglobin utilization protein B (810 aa).

A signal peptide spans 1–22 (MPIPFKPVLAVAAIAQAFPAFA). The region spanning 34 to 166 (NEITVTGTHK…LGGAVNYQTK (133 aa)) is the TBDR plug domain. The TBDR beta-barrel domain maps to 175-810 (DKPYHLGIKG…SYNFTIEAKF (636 aa)). A TonB C-terminal box motif is present at residues 793 to 810 (QRFTSPGRSYNFTIEAKF).

It belongs to the TonB-dependent receptor family.

The protein localises to the cell outer membrane. Its function is as follows. Acts as a receptor for hemoglobin or the hemoglobin/haptoglobin complex and is required for heme uptake. The sequence is that of Hemoglobin-haptoglobin utilization protein B (hpuB) from Neisseria meningitidis serogroup C.